A 372-amino-acid chain; its full sequence is UDP-N-acetylglucosamine 2-epimerase (372 aa).

Substrate-binding positions include R10, K15, D95, E117, H212, Q270, F275, 289–291 (SGG), E295, and R312.

The protein belongs to the UDP-N-acetylglucosamine 2-epimerase family.

The enzyme catalyses UDP-N-acetyl-alpha-D-glucosamine = UDP-N-acetyl-alpha-D-mannosamine. It participates in capsule biogenesis; capsule polysaccharide biosynthesis. Its activity is regulated as follows. Activated by UDP-GlcNAc and inhibited by 2-acetamidoglucal and UDP. Activity is strongly decreased in the presence of Co(2+) and abolished in the presence of Mn(2+) or Zn(2+). Its function is as follows. Catalyzes the interconversion between UDP-N-acetylglucosamine (UDP-GlcNAc) and UDP-N-acetylmannosamine (UDP-ManNAc). Involved in the biosynthesis of the capsular polysaccharides. In vitro, can also use several chemoenzymatically synthesized UDP-ManNAc derivatives as substrates, with lower efficiency. This is UDP-N-acetylglucosamine 2-epimerase from Neisseria meningitidis serogroup A / serotype 4A (strain DSM 15465 / Z2491).